Here is a 197-residue protein sequence, read N- to C-terminus: Phosphoheptose isomerase (197 aa).

The SIS domain maps to 34 to 196 (MVQCLLGGNK…DRTLFPQDEQ (163 aa)). Residue 49 to 51 (NGG) participates in substrate binding. Zn(2+) contacts are provided by histidine 58 and glutamate 62. Residues glutamate 62, 91–92 (ND), 117–119 (STS), serine 122, and glutamine 172 contribute to the substrate site. Residues glutamine 172 and histidine 180 each coordinate Zn(2+).

This sequence belongs to the SIS family. GmhA subfamily. As to quaternary structure, homotetramer. The cofactor is Zn(2+).

It is found in the cytoplasm. The catalysed reaction is 2 D-sedoheptulose 7-phosphate = D-glycero-alpha-D-manno-heptose 7-phosphate + D-glycero-beta-D-manno-heptose 7-phosphate. The protein operates within carbohydrate biosynthesis; D-glycero-D-manno-heptose 7-phosphate biosynthesis; D-glycero-alpha-D-manno-heptose 7-phosphate and D-glycero-beta-D-manno-heptose 7-phosphate from sedoheptulose 7-phosphate: step 1/1. Functionally, catalyzes the isomerization of sedoheptulose 7-phosphate in D-glycero-D-manno-heptose 7-phosphate. The polypeptide is Phosphoheptose isomerase (Shewanella frigidimarina (strain NCIMB 400)).